The chain runs to 233 residues: 7-cyano-7-deazaguanine synthase (233 aa).

Residue 7–17 (CSGGLDSVSLA) participates in ATP binding. C185, C193, C196, and C199 together coordinate Zn(2+).

Belongs to the QueC family. The cofactor is Zn(2+).

The enzyme catalyses 7-carboxy-7-deazaguanine + NH4(+) + ATP = 7-cyano-7-deazaguanine + ADP + phosphate + H2O + H(+). It functions in the pathway purine metabolism; 7-cyano-7-deazaguanine biosynthesis. In terms of biological role, catalyzes the ATP-dependent conversion of 7-carboxy-7-deazaguanine (CDG) to 7-cyano-7-deazaguanine (preQ(0)). The sequence is that of 7-cyano-7-deazaguanine synthase from Ruegeria sp. (strain TM1040) (Silicibacter sp.).